A 48-amino-acid polypeptide reads, in one-letter code: Large ribosomal subunit protein bL33B (48 aa).

The protein belongs to the bacterial ribosomal protein bL33 family.

The protein is Large ribosomal subunit protein bL33B (rpmG2) of Mycoplasma pneumoniae (strain ATCC 29342 / M129 / Subtype 1) (Mycoplasmoides pneumoniae).